The primary structure comprises 734 residues: Photosystem I P700 chlorophyll a apoprotein A2 (734 aa).

The next 8 helical transmembrane spans lie at 46-69 (IFAS…FHVA), 135-158 (LYTG…LHLQ), 175-199 (LNHH…HVAI), 273-291 (IAHH…GHMY), 330-353 (LHFQ…QHIY), 369-395 (AALY…IFFI), 417-439 (AIIS…LYVH), and 517-535 (FLVH…LILV). Residues Cys559 and Cys568 each contribute to the [4Fe-4S] cluster site. 2 consecutive transmembrane segments (helical) span residues 575–596 (AFYL…YWHW) and 643–665 (LSVW…MFLI). Chlorophyll a is bound by residues His654, Met662, and Tyr670. Trp671 lines the phylloquinone pocket. Residues 707 to 727 (LVGLAHFSVGYIFTYAAFLIA) traverse the membrane as a helical segment.

This sequence belongs to the PsaA/PsaB family. The PsaA/B heterodimer binds the P700 chlorophyll special pair and subsequent electron acceptors. PSI consists of a core antenna complex that captures photons, and an electron transfer chain that converts photonic excitation into a charge separation. The eukaryotic PSI reaction center is composed of at least 11 subunits. It depends on P700 is a chlorophyll a/chlorophyll a' dimer, A0 is one or more chlorophyll a, A1 is one or both phylloquinones and FX is a shared 4Fe-4S iron-sulfur center. as a cofactor.

The protein localises to the plastid. It is found in the chloroplast thylakoid membrane. The enzyme catalyses reduced [plastocyanin] + hnu + oxidized [2Fe-2S]-[ferredoxin] = oxidized [plastocyanin] + reduced [2Fe-2S]-[ferredoxin]. In terms of biological role, psaA and PsaB bind P700, the primary electron donor of photosystem I (PSI), as well as the electron acceptors A0, A1 and FX. PSI is a plastocyanin-ferredoxin oxidoreductase, converting photonic excitation into a charge separation, which transfers an electron from the donor P700 chlorophyll pair to the spectroscopically characterized acceptors A0, A1, FX, FA and FB in turn. Oxidized P700 is reduced on the lumenal side of the thylakoid membrane by plastocyanin. The polypeptide is Photosystem I P700 chlorophyll a apoprotein A2 (Staurastrum punctulatum (Green alga)).